The following is a 222-amino-acid chain: Glutathione S-transferase alpha-4 (222 aa).

Position 1 is an N-acetylmethionine (M1). In terms of domain architecture, GST N-terminal spans 3–83; sequence VKPKLYYFQG…YLAAKYNLYG (81 aa). Residues Y9, 54–55, and 67–68 each bind glutathione; these read QV and QT. A GST C-terminal domain is found at 85–208; the sequence is DLKERVRIDM…QPGSQRKPPP (124 aa).

Belongs to the GST superfamily. Alpha family. As to quaternary structure, homodimer.

The protein localises to the cytoplasm. The enzyme catalyses RX + glutathione = an S-substituted glutathione + a halide anion + H(+). Conjugation of reduced glutathione to a wide number of exogenous and endogenous hydrophobic electrophiles. The polypeptide is Glutathione S-transferase alpha-4 (Gsta4) (Rattus norvegicus (Rat)).